The sequence spans 482 residues: 7-deoxyloganetic acid glucosyl transferase (482 aa).

The Proton acceptor role is filled by His-22. An anthocyanidin is bound at residue His-22. Asp-127 (charge relay) is an active-site residue. Thr-149, Ala-362, Gln-364, His-379, Trp-382, Asn-383, Ser-384, and Glu-387 together coordinate UDP-alpha-D-glucose. Ala-402 is an an anthocyanidin binding site. UDP-alpha-D-glucose-binding residues include Asp-403 and Gln-404.

It belongs to the UDP-glycosyltransferase family. As to expression, expressed in the leaf internal phloem-associated parenchyma (IPAP) inside the mesophyll. Mostly observed in leaves, roots and stems, and, to a lower extent, in flowers.

It localises to the nucleus. Its subcellular location is the cytoplasm. The protein resides in the cytosol. It carries out the reaction 7-deoxyloganetate + UDP-alpha-D-glucose = 7-deoxyloganate + UDP + H(+). The protein operates within alkaloid biosynthesis. Its function is as follows. Component of the seco-iridoid and derivatives monoterpenoid indole alkaloids (MIAs, e.g. vincristine, quinine, and strychnine) biosynthesis pathway. Catalyzes the glucosylation of 7-deoxyloganetic acid to form 7-deoxyloganic acid using UDP-glucose as the sugar donor. Inactive with loganetic acid, loganetin, iridodial, iridotrial, 8-OH-geraniol, jasmonic acid, gibberellic acid, indole acetic acid, salicylic acid, abscisic acid, zeatin and luteolin. This Catharanthus roseus (Madagascar periwinkle) protein is 7-deoxyloganetic acid glucosyl transferase.